We begin with the raw amino-acid sequence, 329 residues long: Acetyl-coenzyme A carboxylase carboxyl transferase subunit alpha (329 aa).

The 255-residue stretch at 40–294 (QLETLAARRR…REALERNLSE (255 aa)) folds into the CoA carboxyltransferase C-terminal domain.

It belongs to the AccA family. As to quaternary structure, acetyl-CoA carboxylase is a heterohexamer composed of biotin carboxyl carrier protein (AccB), biotin carboxylase (AccC) and two subunits each of ACCase subunit alpha (AccA) and ACCase subunit beta (AccD).

The protein localises to the cytoplasm. The enzyme catalyses N(6)-carboxybiotinyl-L-lysyl-[protein] + acetyl-CoA = N(6)-biotinyl-L-lysyl-[protein] + malonyl-CoA. It functions in the pathway lipid metabolism; malonyl-CoA biosynthesis; malonyl-CoA from acetyl-CoA: step 1/1. Its function is as follows. Component of the acetyl coenzyme A carboxylase (ACC) complex. First, biotin carboxylase catalyzes the carboxylation of biotin on its carrier protein (BCCP) and then the CO(2) group is transferred by the carboxyltransferase to acetyl-CoA to form malonyl-CoA. This Synechococcus sp. (strain CC9311) protein is Acetyl-coenzyme A carboxylase carboxyl transferase subunit alpha.